The primary structure comprises 167 residues: Lipoprotein signal peptidase (167 aa).

3 helical membrane passes run 9–29 (AWLY…TKNL), 68–88 (LPLL…YALY), and 98–118 (MGLI…LGMV). Active-site residues include Asp-120 and Asp-138. Residues 130-150 (YWPAFNIADASISIGIALLIL) traverse the membrane as a helical segment.

The protein belongs to the peptidase A8 family.

Its subcellular location is the cell inner membrane. The catalysed reaction is Release of signal peptides from bacterial membrane prolipoproteins. Hydrolyzes -Xaa-Yaa-Zaa-|-(S,diacylglyceryl)Cys-, in which Xaa is hydrophobic (preferably Leu), and Yaa (Ala or Ser) and Zaa (Gly or Ala) have small, neutral side chains.. Its pathway is protein modification; lipoprotein biosynthesis (signal peptide cleavage). In terms of biological role, this protein specifically catalyzes the removal of signal peptides from prolipoproteins. This chain is Lipoprotein signal peptidase, found in Aquifex aeolicus (strain VF5).